The sequence spans 355 residues: Acyl-CoA desaturase 1 (355 aa).

Residues 1 to 68 are Cytoplasmic-facing; that stretch reads MPAHMLQEIS…EGPPPKLEYV (68 aa). Residues 9-20 are compositionally biased toward low complexity; sequence ISSSYTTTTTIT. A disordered region spans residues 9–33; the sequence is ISSSYTTTTTITAPPSGNEREKVKT. Residues 69-89 form a helical membrane-spanning segment; the sequence is WRNIILMVLLHLGGLYGIILV. Residue asparagine 71 coordinates substrate. Residues 90–93 are Lumenal-facing; it reads PSCK. A helical transmembrane segment spans residues 94-114; sequence LYTCLFGIFYYMTSALGITAG. Residues 115-213 lie on the Cytoplasmic side of the membrane; the sequence is AHRLWSHRTY…EKLVMFQRRY (99 aa). The Fe cation site is built by histidine 116 and histidine 121. A Histidine box-1 motif is present at residues 116 to 121; sequence HRLWSH. Asparagine 144, arginine 151, and aspartate 152 together coordinate substrate. 3 residues coordinate Fe cation: histidine 153, histidine 156, and histidine 157. The Histidine box-2 motif lies at 153–157; sequence HRAHH. The substrate site is built by arginine 184 and lysine 185. A helical membrane pass occupies residues 214–233; the sequence is YKPGLLLMCFILPTLVPWYC. The Lumenal portion of the chain corresponds to 234–237; the sequence is WGET. Residues 238-259 traverse the membrane as a helical segment; that stretch reads FVNSLFVSTFLRYTLVLNATWL. Position 258 (tryptophan 258) interacts with substrate. Topologically, residues 260-355 are cytoplasmic; the sequence is VNSAAHLYGY…RTGDGSHKSS (96 aa). Fe cation contacts are provided by histidine 265, histidine 294, histidine 297, and histidine 298. Positions 294–298 match the Histidine box-3 motif; the sequence is HNYHH.

It belongs to the fatty acid desaturase type 1 family. Fe(2+) serves as cofactor. In terms of tissue distribution, detected in liver (at protein level). Detected in skin and liver. Detected in sebaceous gland, but not in hair follicle. Detected in white and brown adipose tissue, eyelid, Harderian gland, and at lower levels in Meibomian gland, eyeball and adrenal gland. Highly expressed in liver, and detected at low levels in brain, heart, lung, stomach, skeletal muscle and kidney.

The protein resides in the endoplasmic reticulum membrane. It is found in the microsome membrane. The enzyme catalyses octadecanoyl-CoA + 2 Fe(II)-[cytochrome b5] + O2 + 2 H(+) = (9Z)-octadecenoyl-CoA + 2 Fe(III)-[cytochrome b5] + 2 H2O. Its function is as follows. Stearoyl-CoA desaturase that utilizes O(2) and electrons from reduced cytochrome b5 to introduce the first double bond into saturated fatty acyl-CoA substrates. Catalyzes the insertion of a cis double bond at the Delta-9 position into fatty acyl-CoA substrates including palmitoyl-CoA and stearoyl-CoA. Gives rise to a mixture of 16:1 and 18:1 unsaturated fatty acids. Plays an important role in lipid biosynthesis. Plays an important role in regulating the expression of genes that are involved in lipogenesis and in regulating mitochondrial fatty acid oxidation. Plays an important role in body energy homeostasis. Contributes to the biosynthesis of membrane phospholipids, cholesterol esters and triglycerides. Required for normal development of sebaceous glands. Required for the biosynthesis of normal levels of Delta-9 unsaturated fatty acids and 1-alkyl-2,3-diacylglycerol in the Harderian gland. Required for normal production of meibum, an oily material that prevents drying of the cornea. The protein is Acyl-CoA desaturase 1 (Scd1) of Mus musculus (Mouse).